Here is a 58-residue protein sequence, read N- to C-terminus: Small ribosomal subunit protein bS21 (58 aa).

It belongs to the bacterial ribosomal protein bS21 family.

The sequence is that of Small ribosomal subunit protein bS21 from Staphylococcus saprophyticus subsp. saprophyticus (strain ATCC 15305 / DSM 20229 / NCIMB 8711 / NCTC 7292 / S-41).